The sequence spans 236 residues: L-aspartate dehydrogenase (236 aa).

Residues 10–11 (AI), Asp-31, 58–59 (AS), Tyr-66, 80–81 (LS), Ala-111, and Asn-162 each bind NAD(+). His-189 is a catalytic residue. Residue 212-215 (NPKT) coordinates NAD(+).

The protein belongs to the L-aspartate dehydrogenase family. As to quaternary structure, homodimer.

The enzyme catalyses L-aspartate + NADP(+) + H2O = oxaloacetate + NH4(+) + NADPH + H(+). It catalyses the reaction L-aspartate + NAD(+) + H2O = oxaloacetate + NH4(+) + NADH + H(+). The protein operates within cofactor biosynthesis; NAD(+) biosynthesis; iminoaspartate from L-aspartate (dehydrogenase route): step 1/1. Its function is as follows. Specifically catalyzes the NAD or NADP-dependent dehydrogenation of L-aspartate to iminoaspartate. The sequence is that of L-aspartate dehydrogenase from Archaeoglobus fulgidus (strain ATCC 49558 / DSM 4304 / JCM 9628 / NBRC 100126 / VC-16).